We begin with the raw amino-acid sequence, 138 residues long: Nanos homolog 2 (138 aa).

The segment at 31-55 is disordered; the sequence is ETQEIEEPSPGPPLGQDQGLGAPGA. The segment at 62–116 adopts a Nanos-type zinc-finger fold; sequence LCNFCKHNGESRHVYSSHQLKTPDGVVVCPILRHYVCPVCGATGDQAHTLKYCPL. Positions 63, 66, 79, 90, 98, 101, 109, and 114 each coordinate Zn(2+). 2 consecutive short sequence motifs (C2HC) follow at residues 63 to 90 and 98 to 114; these read CNFC…VVVC and CPVC…LKYC.

It belongs to the nanos family. Interacts with CNOT1, CNOT3, CNOT6L, CNOT7 and CNOT9. Testis and ovary. Expression found in several spermatogenic stages: in cells on the periphery of the tubules which could correspond to spermatogonia, in spermatocytes and in round spermatids (at protein level).

It is found in the cytoplasm. It localises to the P-body. The protein localises to the perinuclear region. Plays a key role in the sexual differentiation of germ cells by promoting the male fate but suppressing the female fate. Represses the female fate pathways by suppressing meiosis, which in turn results in the promotion of the male fate. Maintains the suppression of meiosis by preventing STRA8 expression, which is required for premeiotic DNA replication, after CYP26B1 is decreased. Regulates the localization of the CCR4-NOT deadenylation complex to P-bodies and plays a role in recruiting the complex to trigger the degradation of mRNAs involved in meiosis. Required for the maintenance of the spermatogonial stem cell population. Not essential for the assembly of P-bodies but is required for the maintenance of their normal state. In Homo sapiens (Human), this protein is Nanos homolog 2 (NANOS2).